The following is a 673-amino-acid chain: Metal-nicotianamine transporter YSL1 (673 aa).

The span at 1-13 (MEIEQRRIMKREG) shows a compositional bias: basic and acidic residues. A disordered region spans residues 1-39 (MEIEQRRIMKREGEEEEDNNQLSLQEEEPDTEEEMSGRT). The segment covering 14-34 (EEEEDNNQLSLQEEEPDTEEE) has biased composition (acidic residues). 16 consecutive transmembrane segments (helical) span residues 46 to 66 (QITV…SVIA), 71 to 91 (LTTG…FVFV), 119 to 139 (SAVA…LLGL), 163 to 183 (GLGW…FVLI), 225 to 245 (FMKY…FSGI), 260 to 280 (AWKQ…GMIC), 283 to 303 (LVNL…WPLL), 328 to 348 (VFLS…KILF), 392 to 412 (FAVS…PLIF), 420 to 440 (VIVA…GAGL), 442 to 462 (DINM…AVTG), 467 to 487 (VVAG…SCIL), 510 to 530 (IGTV…YKAF), 558 to 578 (FSAL…FAVL), 604 to 624 (FLVG…VFVW), and 642 to 662 (GLIC…LAGV).

This sequence belongs to the YSL (TC 2.A.67.2) family. As to expression, low levels of expression in leaves and shoots, but not detected in roots. Restricted to the vasculature, in the xylem parenchyma surrounding xylem tubes. Expressed in pollen grains, in the vasculature of petals and sepals, in the carpel veins, in the style underneath the stigmatic papillae, in the vascular tissue of the funiculus and in the chalazal endosperm.

The protein localises to the membrane. Functionally, involved in iron loading of the seeds. Acts probably as a transporter of iron- and metal-nicotianamine chelates. The polypeptide is Metal-nicotianamine transporter YSL1 (YSL1) (Arabidopsis thaliana (Mouse-ear cress)).